Consider the following 270-residue polypeptide: MAPKVFYISDGTAITAEVFGHAVLSQFPLEFESLTIPFVETLAKAEQVKRQINDCFITTGERPLVFHSIVKAEIRDIIYSSEGVDYDFLNTFVAPLEQHLGVSASPVVHRTHGKANHGYEARIDAINFAMDNDDGQTMKHMDQADLILLGVSRCGKTPSSLYLSMQFGIKAANYPFTEDDMDNLKLPEALKRNKKKLFGLTIDPVRLHEIRQSRMENSRYSSLKQCRLEVKEVEMMFKRERIPYIDTTNHSVEEIATKILDVTGLERHMF.

An ADP-binding site is contributed by Gly-150–Thr-157.

It belongs to the pyruvate, phosphate/water dikinase regulatory protein family. PSRP subfamily.

The catalysed reaction is [pyruvate, water dikinase] + ADP = [pyruvate, water dikinase]-phosphate + AMP + H(+). It carries out the reaction [pyruvate, water dikinase]-phosphate + phosphate + H(+) = [pyruvate, water dikinase] + diphosphate. Bifunctional serine/threonine kinase and phosphorylase involved in the regulation of the phosphoenolpyruvate synthase (PEPS) by catalyzing its phosphorylation/dephosphorylation. The chain is Putative phosphoenolpyruvate synthase regulatory protein from Shewanella putrefaciens (strain CN-32 / ATCC BAA-453).